We begin with the raw amino-acid sequence, 202 residues long: Sterile alpha motif domain-containing protein 10 (202 aa).

The SAM domain occupies 118 to 184; the sequence is WSQQDVCKWL…LQQVLRLQVR (67 aa).

The sequence is that of Sterile alpha motif domain-containing protein 10 (SAMD10) from Homo sapiens (Human).